Here is a 563-residue protein sequence, read N- to C-terminus: MSKSQEQRLQNFVTVIQGLNDILDDKMDEATEKFKSGNSSFHLSGQAVVAFIQAVLTFEPSRFKDSQNRIDIAIKALSADKDDASKNNTFLSTFDPGVEYRVSIGLMLLLSALIGFCSESIVTSVKSVYKLRKAHSIFSKINKRHFDHFSAAFHSTGRSDVDLANEYVQTGTLLCTGLFTLLISLLPPKMITILNVFGYKGDRDWALQCMWMPALQRPTSFFAAVAFAALIQYYSGAVQLCSIYKKTPEEPDGWPDKRCFEILEKVEKAHPDGPMWPLHRAKLLSMVKKQDEAIVVLEELMAKPPPRLKQLEVLIVFEHALDCAFSHRYVDGANSFLKLSSLNDSSTALYSYFAAACFLQDVHVNANVEALEKASKLLEPLHDLVANKTAPLDVHIRRKVGKLIKRRASAGNQGGLAEYVGFSPLYELVYVWNGFRRMTDDELSKFDVERMEPWQDQDDDICQALIKATVLRNLGRTDEVFPILQKICAVTRTTETWAVAFAHYEMAVAFFESNGSKKEGLKHCDAYLRKARDFGGDNEFESRLIIRVQLARHVVRKCLQSMS.

It belongs to the IML2 family. In terms of assembly, interacts with lipid droplet proteins.

Its subcellular location is the cytoplasm. It localises to the nucleus. Its function is as follows. Inclusion body (IB) resident protein that interacts strongly with lipid droplet (LD) proteins. Involved in LD-mediated IB clearing after protein folding stress, probably by enabling access to the IBs of an LD-stored soluble sterol derivative that acts as a chaperone in inclusion clearing. The chain is Inclusion body clearance protein IML2 from Schizosaccharomyces pombe (strain 972 / ATCC 24843) (Fission yeast).